The sequence spans 59 residues: Small ribosomal subunit protein bS21 (59 aa).

The disordered stretch occupies residues 36–59 (EHYEKPSVKRKKKAEAAKRNKSKF). Basic residues predominate over residues 43–59 (VKRKKKAEAAKRNKSKF).

Belongs to the bacterial ribosomal protein bS21 family.

The polypeptide is Small ribosomal subunit protein bS21 (Alkaliphilus oremlandii (strain OhILAs) (Clostridium oremlandii (strain OhILAs))).